A 920-amino-acid chain; its full sequence is MNVENQDPNIMVIPNNNLGPIDGNNISPAMNDENSNNGSSFLKNLVNTGTNLLFSSSSSIASPPNLGGLSNDSTNNNSNSNNTIDSSKPLSFENDMSDGYEALVRRSEIAIDQCKELLDFFKKRASEEEKYSKNISNMFSKFKVKDDHDTFQKGVSLLNKINDAESTIHRSFSQNITTNLYHPLNEAIKDMEKSRKRLLEDGKKLKNDLKDSIENVKKSNQKYEKLCREMEQAKLELIEEGNDTKSGKVETLEKKLEKTKLASIKAEDEYKEQINETNEFISGVYQNRLSENLREFQQFELTRLEIMKSNIRNYIGFMKDIPQALQCEIDSTKGFVDIIDPEVDLQNYIMNNSNPKKVLLPFIFEAYNDHKPFVDQHNQNSSSSSSTNALNYASPMSASGSITNTITSQSGSTIISNGASQPIEIPSPQPISEQQQIPPQQQQQQQQAQVPPTSINQSSSPPVNPMGRQQSLKENIFGFFNKATTNLKSSTSSLLTKDGNSTTSSNTSTSNSNQLSKSGIGLPIINTNSIFGVELEVLIENDNSKKKGNGVELEVPLILTQFVQALLKLESFKMDGVFVSLPSHFNIQQEKQKLDQTGTLENITDVYLIASLFKNWIGDLPNPLISYAIYQEIIEAPDNAWKIIESGIPILHRRVLHYIIDFLVDFVNCSKMDTHSISLIFTPVLIRSPFNGDSLLNSKKEVAVIENMIIDSLETKRGNYILKRNLPIIPDDENSDDDDDDSGHIDDENNSSTSGENDINTTNINNNNNVNSNNDTNNNNNNSNTTTTNNNNNNDSNNSNSTNNNNNNNNNNTNNDDNESNNSGYGVSSNGNNINSSVGGSVTHHFLYQTTPTNNVTPVLSDFFDTNSSNGSSKANTNTHNLGVRNSSNISFDTISTNQSDSEPVLVEYDNDDFDILSYK.

Residues 65–87 (NLGGLSNDSTNNNSNSNNTIDSS) show a composition bias toward low complexity. Residues 65–91 (NLGGLSNDSTNNNSNSNNTIDSSKPLS) are disordered. The 255-residue stretch at 90–344 (LSFENDMSDG…FVDIIDPEVD (255 aa)) folds into the F-BAR domain. Positions 184–276 (LNEAIKDMEK…EDEYKEQINE (93 aa)) form a coiled coil. Low complexity predominate over residues 403-449 (TNTITSQSGSTIISNGASQPIEIPSPQPISEQQQIPPQQQQQQQQAQ). 2 disordered regions span residues 403-468 (TNTI…PMGR) and 490-518 (STSS…LSKS). The span at 450 to 468 (VPPTSINQSSSPPVNPMGR) shows a compositional bias: polar residues. A compositionally biased stretch (low complexity) spans 490–513 (STSSLLTKDGNSTTSSNTSTSNSN). The region spanning 533–716 (VELEVLIEND…NMIIDSLETK (184 aa)) is the Rho-GAP domain. The tract at residues 727–836 (PIIPDDENSD…VSSNGNNINS (110 aa)) is disordered. The span at 730-741 (PDDENSDDDDDD) shows a compositional bias: acidic residues. Positions 757–836 (NDINTTNINN…VSSNGNNINS (80 aa)) are enriched in low complexity.

The protein resides in the cytoplasm. Its subcellular location is the contractile vacuole. Its function is as follows. Rho GTPase-activating protein involved in the signal transduction pathway. Regulator of the contractile vacuole network as well as involved in driving vacuole emptying. The polypeptide is GTPase activating protein homolog 1 (mgp1) (Dictyostelium discoideum (Social amoeba)).